The chain runs to 520 residues: GMP synthase [glutamine-hydrolyzing] (520 aa).

The region spanning 12 to 205 (KIIVLDYGSQ…AISICGGRGD (194 aa)) is the Glutamine amidotransferase type-1 domain. Catalysis depends on Cys89, which acts as the Nucleophile. Active-site residues include His179 and Glu181. The 190-residue stretch at 206-395 (WSMDNFIDMQ…LGMPDEVVWR (190 aa)) folds into the GMPS ATP-PPase domain. 233 to 239 (SGGVDSS) serves as a coordination point for ATP.

As to quaternary structure, homodimer.

It carries out the reaction XMP + L-glutamine + ATP + H2O = GMP + L-glutamate + AMP + diphosphate + 2 H(+). It participates in purine metabolism; GMP biosynthesis; GMP from XMP (L-Gln route): step 1/1. Catalyzes the synthesis of GMP from XMP. The chain is GMP synthase [glutamine-hydrolyzing] from Streptococcus equi subsp. equi (strain 4047).